The primary structure comprises 357 residues: Membrane-bound lytic murein transglycosylase C (357 aa).

An N-terminal signal peptide occupies residues 1-15; the sequence is MKKYLLLALLPFLYA. Residue C16 is the site of N-palmitoyl cysteine attachment. The S-diacylglycerol cysteine moiety is linked to residue C16.

The protein belongs to the transglycosylase Slt family.

It localises to the cell outer membrane. The catalysed reaction is Exolytic cleavage of the (1-&gt;4)-beta-glycosidic linkage between N-acetylmuramic acid (MurNAc) and N-acetylglucosamine (GlcNAc) residues in peptidoglycan, from either the reducing or the non-reducing ends of the peptidoglycan chains, with concomitant formation of a 1,6-anhydrobond in the MurNAc residue.. Murein-degrading enzyme. May play a role in recycling of muropeptides during cell elongation and/or cell division. The sequence is that of Membrane-bound lytic murein transglycosylase C from Haemophilus influenzae (strain PittGG).